Reading from the N-terminus, the 435-residue chain is BAHD acyltransferase BIA1 (435 aa).

Residues His151 and Asp369 each act as proton acceptor in the active site.

The protein belongs to the plant acyltransferase family. Mostly expressed in roots (particularly in the root elongation zone), and, to a lower extent, in seedling, leaves (especially in hydathodes), siliques (e.g. in developing seeds) and flowers.

Its subcellular location is the cytoplasm. Its function is as follows. Monitors brassinosteroids (BR) responses and homeostasis, particularly in the root and hypocotyl in darkness. Promotes flavonoid biosynthesis. The polypeptide is BAHD acyltransferase BIA1 (Arabidopsis thaliana (Mouse-ear cress)).